We begin with the raw amino-acid sequence, 277 residues long: Putative phosphoenolpyruvate synthase regulatory protein (277 aa).

157–164 (GVSRSGKT) provides a ligand contact to ADP.

This sequence belongs to the pyruvate, phosphate/water dikinase regulatory protein family. PSRP subfamily.

The enzyme catalyses [pyruvate, water dikinase] + ADP = [pyruvate, water dikinase]-phosphate + AMP + H(+). It carries out the reaction [pyruvate, water dikinase]-phosphate + phosphate + H(+) = [pyruvate, water dikinase] + diphosphate. Its function is as follows. Bifunctional serine/threonine kinase and phosphorylase involved in the regulation of the phosphoenolpyruvate synthase (PEPS) by catalyzing its phosphorylation/dephosphorylation. The protein is Putative phosphoenolpyruvate synthase regulatory protein of Aromatoleum aromaticum (strain DSM 19018 / LMG 30748 / EbN1) (Azoarcus sp. (strain EbN1)).